The sequence spans 2287 residues: Protein Ycf2 (2287 aa).

An ATP-binding site is contributed by 1641–1648 (GSIGTGRS).

The protein belongs to the Ycf2 family.

The protein localises to the plastid. The protein resides in the chloroplast stroma. Its function is as follows. Probable ATPase of unknown function. Its presence in a non-photosynthetic plant (Epifagus virginiana) and experiments in tobacco indicate that it has an essential function which is probably not related to photosynthesis. The sequence is that of Protein Ycf2 from Lepidium virginicum (Virginia pepperweed).